A 461-amino-acid polypeptide reads, in one-letter code: MLAAARALRGPRPRWPTPAREHWTPAGRSRSRREAAEAEADVPVFQYVGERAARADRVFVWGFSFSGALGVPSFVVPSSGPGPRAGLRPRRRIQPVPYRLELDHKISSAACGYGFTLLSSKTKDVTKVWGMGLNKDSQLGFHRSRKDKTRGYEYVLEPSPVPLPLDRPQETKVLQVSCGRAHSLVLTDREGVFSMGNNSHGQCGRKVVEDEVYSESHKVHRMQDFDGQVVQVVCGQDHSLFLTDKGEVYSCGWGADGQTGLGHYNITSTPSKLGGDLAGVTVVQVATYGDCCLALSADGGVFGWGNSEYLQLASVTDSTQVNVPRCLPFSGVGKVKQVACGGTGCAVLNAEGHVFVWGYGILGKGPKLLETAIPEMIPPTLFGLTEFNPEVQVSQIRCGLSHFAALTNKGELFVWGKNIRGCLGIGRLEDQYFPWRVTMPGEPVDVACGVDHMVTLAKSFI.

Over residues 1 to 10 (MLAAARALRG) the composition is skewed to low complexity. Residues 1–34 (MLAAARALRGPRPRWPTPAREHWTPAGRSRSRRE) constitute a mitochondrion transit peptide. The tract at residues 1 to 35 (MLAAARALRGPRPRWPTPAREHWTPAGRSRSRREA) is disordered. 7 RCC1 repeats span residues 55-121 (ADRV…LSSK), 125-188 (VTKV…VLTD), 190-244 (EGVF…FLTD), 245-297 (KGEV…ALSA), 298-350 (DGGV…VLNA), 352-408 (GHVF…ALTN), and 409-458 (KGEL…TLAK).

In terms of assembly, forms a regulatory protein-RNA complex, consisting of RCC1L, NGRN, RPUSD3, RPUSD4, TRUB2, FASTKD2 and 16S mt-rRNA. Interacts with 16S mt-rRNA; this interaction is direct. Interacts with OPA1; this interaction is direct. In terms of tissue distribution, at E8.5, broadly expressed in yolk sac placenta, decidua, and embryo, with highest levels found in the trophoblast giant cells (TGCs) and ectoplacental cone (at protein level).

Its subcellular location is the mitochondrion inner membrane. Guanine nucleotide exchange factor (GEF) for mitochondrial dynamin-related GTPase OPA1. Activates OPA1, by exchanging bound GDP for free GTP, and drives OPA1 and MFN1-dependent mitochondrial fusion. Plays an essential role in mitochondrial ribosome biogenesis. As a component of a functional protein-RNA module, consisting of RCC1L, NGRN, RPUSD3, RPUSD4, TRUB2, FASTKD2 and 16S mitochondrial ribosomal RNA (16S mt-rRNA), controls 16S mt-rRNA abundance and is required for intra-mitochondrial translation of core subunits of the oxidative phosphorylation system. The sequence is that of RCC1-like G exchanging factor-like protein from Mus musculus (Mouse).